We begin with the raw amino-acid sequence, 535 residues long: Peptide chain release factor 3 (535 aa).

Residues 8–276 (ARRRTFAIIS…ALVEQAPPPG (269 aa)) enclose the tr-type G domain. Residues 17-24 (SHPDAGKT), 85-89 (DTPGH), and 139-142 (NKMD) each bind GTP.

This sequence belongs to the TRAFAC class translation factor GTPase superfamily. Classic translation factor GTPase family. PrfC subfamily.

The protein localises to the cytoplasm. Increases the formation of ribosomal termination complexes and stimulates activities of RF-1 and RF-2. It binds guanine nucleotides and has strong preference for UGA stop codons. It may interact directly with the ribosome. The stimulation of RF-1 and RF-2 is significantly reduced by GTP and GDP, but not by GMP. The protein is Peptide chain release factor 3 of Bordetella petrii (strain ATCC BAA-461 / DSM 12804 / CCUG 43448).